The chain runs to 517 residues: Aldehyde dehydrogenase X, mitochondrial (517 aa).

A mitochondrion-targeting transit peptide spans 1–17; that stretch reads MLRFLAPRLLSLQGRTA. Lys-51 carries the N6-acetyllysine modification. Lys-52 is subject to N6-acetyllysine; alternate. Lys-52 is subject to N6-succinyllysine; alternate. Lys-81 carries the post-translational modification N6-succinyllysine. 262 to 267 is a binding site for NAD(+); sequence GSTEVG. Glu-285 serves as the catalytic Proton acceptor. Cys-319 serves as the catalytic Nucleophile. 5 positions are modified to N6-acetyllysine; alternate: Lys-364, Lys-383, Lys-399, Lys-414, and Lys-426. N6-succinyllysine; alternate is present on residues Lys-364, Lys-383, Lys-399, Lys-414, and Lys-426. Lys-429 is modified (N6-acetyllysine).

This sequence belongs to the aldehyde dehydrogenase family. In terms of assembly, homotetramer.

It is found in the mitochondrion matrix. It carries out the reaction an aldehyde + NAD(+) + H2O = a carboxylate + NADH + 2 H(+). It participates in alcohol metabolism; ethanol degradation; acetate from ethanol: step 2/2. Its function is as follows. ALDHs play a major role in the detoxification of alcohol-derived acetaldehyde. They are involved in the metabolism of corticosteroids, biogenic amines, neurotransmitters, and lipid peroxidation. The chain is Aldehyde dehydrogenase X, mitochondrial (ALDH1B1) from Pongo abelii (Sumatran orangutan).